A 331-amino-acid polypeptide reads, in one-letter code: Serine racemase (331 aa).

ATP contacts are provided by serine 34 and lysine 54. Residue lysine 59 is the Proton acceptor of the active site. Lysine 59 is modified (N6-(pyridoxal phosphate)lysine). Threonine 81 is a binding site for Ca(2+). Catalysis depends on serine 84, which acts as the Proton acceptor. Asparagine 86 serves as a coordination point for pyridoxal 5'-phosphate. Tyrosine 121 serves as a coordination point for ATP. A Mg(2+)-binding site is contributed by aspartate 178. Residues glycine 186, glycine 187, and glycine 188 each contribute to the pyridoxal 5'-phosphate site. Ca(2+) is bound by residues glutamate 210, alanine 214, and aspartate 216. Residues glutamate 210, alanine 214, and aspartate 216 each contribute to the Mg(2+) site. Positions 210, 214, and 216 each coordinate Mn(2+). Residue lysine 278 coordinates ATP. Serine 314 contacts pyridoxal 5'-phosphate. Asparagine 317 is a binding site for ATP.

This sequence belongs to the serine/threonine dehydratase family. Homodimer. Requires Mg(2+) as cofactor. The cofactor is Mn(2+). Ca(2+) is required as a cofactor. Pyridoxal 5'-phosphate serves as cofactor. Expressed in the whole plant.

The enzyme catalyses L-serine = D-serine. It catalyses the reaction L-serine = pyruvate + NH4(+). It carries out the reaction D-serine = pyruvate + NH4(+). Inhibited by hydroxylamine. Racemase activity is enhanced by Ca(2+), Mg(2+), Mn(2+), and is decreased by Ni(2+), Zn(2+). Hydratase activity is enhanced by Ca(2+), Mg(2+), Mn(2+), Cu(2+), Fe(2+), Ni(2+). Functionally, catalyzes the synthesis of D-serine from L-serine. Has dehydratase activity towards both L-serine and D-serine. Displays high substrate specificity for L-serine, whereas L-alanine, L-arginine, and L-glutamine were poor substrates. In Arabidopsis thaliana (Mouse-ear cress), this protein is Serine racemase (SR).